The following is a 141-amino-acid chain: Albumin-8 (141 aa).

The N-terminal stretch at 1–25 is a signal peptide; sequence MARFSIVFAAAGVLLLVAMAPVSEA. A propeptide spanning residues 26–38 is cleaved from the precursor; it reads STTTIITTIIEEN. Intrachain disulfides connect cysteine 49–cysteine 100, cysteine 62–cysteine 89, cysteine 90–cysteine 132, and cysteine 102–cysteine 139.

Belongs to the 2S seed storage albumins family. In terms of assembly, heterodimer; disulfide-linked.

Its function is as follows. This is a 2S seed storage protein. This Helianthus annuus (Common sunflower) protein is Albumin-8.